Consider the following 518-residue polypeptide: Sensory neuron membrane protein 1 (518 aa).

Residues Met-1–Gly-8 are Cytoplasmic-facing. The chain crosses the membrane as a helical span at residues Ile-9–Leu-29. The Extracellular segment spans residues Ile-30 to Asp-456. N-linked (GlcNAc...) asparagine glycans are attached at residues Asn-64, Asn-186, Asn-225, Asn-316, Asn-334, and Asn-381. Disulfide bonds link Cys-265–Cys-330, Cys-294–Cys-349, and Cys-332–Cys-338. Residues Val-457–Tyr-477 traverse the membrane as a helical segment. Residues Tyr-478–Asn-518 are Cytoplasmic-facing.

It belongs to the CD36 family.

Its subcellular location is the cell membrane. Plays an olfactory role that is not restricted to pheromone sensitivity. The polypeptide is Sensory neuron membrane protein 1 (Pediculus humanus subsp. corporis (Body louse)).